The chain runs to 64 residues: Putative isoleucine--tRNA ligase (64 aa).

It belongs to the class-I aminoacyl-tRNA synthetase family. In terms of assembly, member of a complex that includes annexin.

The enzyme catalyses tRNA(Ile) + L-isoleucine + ATP = L-isoleucyl-tRNA(Ile) + AMP + diphosphate. This Physarum polycephalum (Slime mold) protein is Putative isoleucine--tRNA ligase.